A 228-amino-acid polypeptide reads, in one-letter code: Cytochrome c oxidase subunit 2 (228 aa).

At 1–14 (MAYPLQLGLQDASS) the chain is on the mitochondrial intermembrane side. Residues 15 to 45 (PIMEELTNFHDHTLMIVFLISSLVLYLISLM) traverse the membrane as a helical segment. The Mitochondrial matrix segment spans residues 46-59 (LTTKLIHTSTMDAQ). The chain crosses the membrane as a helical span at residues 60 to 87 (EVETIWTILPAIILILIALPSLRILYMM). The Mitochondrial intermembrane segment spans residues 88 to 228 (DEINNPVLTV…FENWSVSMTQ (141 aa)). Residues His161, Cys196, Glu198, Cys200, His204, and Met207 each coordinate Cu cation. Residue Glu198 participates in Mg(2+) binding.

This sequence belongs to the cytochrome c oxidase subunit 2 family. Component of the cytochrome c oxidase (complex IV, CIV), a multisubunit enzyme composed of 14 subunits. The complex is composed of a catalytic core of 3 subunits MT-CO1, MT-CO2 and MT-CO3, encoded in the mitochondrial DNA, and 11 supernumerary subunits COX4I, COX5A, COX5B, COX6A, COX6B, COX6C, COX7A, COX7B, COX7C, COX8 and NDUFA4, which are encoded in the nuclear genome. The complex exists as a monomer or a dimer and forms supercomplexes (SCs) in the inner mitochondrial membrane with NADH-ubiquinone oxidoreductase (complex I, CI) and ubiquinol-cytochrome c oxidoreductase (cytochrome b-c1 complex, complex III, CIII), resulting in different assemblies (supercomplex SCI(1)III(2)IV(1) and megacomplex MCI(2)III(2)IV(2)). Found in a complex with TMEM177, COA6, COX18, COX20, SCO1 and SCO2. Interacts with TMEM177 in a COX20-dependent manner. Interacts with COX20. Interacts with COX16. Requires Cu cation as cofactor.

It localises to the mitochondrion inner membrane. It carries out the reaction 4 Fe(II)-[cytochrome c] + O2 + 8 H(+)(in) = 4 Fe(III)-[cytochrome c] + 2 H2O + 4 H(+)(out). Component of the cytochrome c oxidase, the last enzyme in the mitochondrial electron transport chain which drives oxidative phosphorylation. The respiratory chain contains 3 multisubunit complexes succinate dehydrogenase (complex II, CII), ubiquinol-cytochrome c oxidoreductase (cytochrome b-c1 complex, complex III, CIII) and cytochrome c oxidase (complex IV, CIV), that cooperate to transfer electrons derived from NADH and succinate to molecular oxygen, creating an electrochemical gradient over the inner membrane that drives transmembrane transport and the ATP synthase. Cytochrome c oxidase is the component of the respiratory chain that catalyzes the reduction of oxygen to water. Electrons originating from reduced cytochrome c in the intermembrane space (IMS) are transferred via the dinuclear copper A center (CU(A)) of subunit 2 and heme A of subunit 1 to the active site in subunit 1, a binuclear center (BNC) formed by heme A3 and copper B (CU(B)). The BNC reduces molecular oxygen to 2 water molecules using 4 electrons from cytochrome c in the IMS and 4 protons from the mitochondrial matrix. This chain is Cytochrome c oxidase subunit 2 (MT-CO2), found in Meriones shawi (Shaw's jird).